A 345-amino-acid chain; its full sequence is N-acetyl-gamma-glutamyl-phosphate reductase (345 aa).

Cys-149 is a catalytic residue.

This sequence belongs to the NAGSA dehydrogenase family. Type 1 subfamily.

The protein resides in the cytoplasm. The enzyme catalyses N-acetyl-L-glutamate 5-semialdehyde + phosphate + NADP(+) = N-acetyl-L-glutamyl 5-phosphate + NADPH + H(+). Its pathway is amino-acid biosynthesis; L-arginine biosynthesis; N(2)-acetyl-L-ornithine from L-glutamate: step 3/4. In terms of biological role, catalyzes the NADPH-dependent reduction of N-acetyl-5-glutamyl phosphate to yield N-acetyl-L-glutamate 5-semialdehyde. The chain is N-acetyl-gamma-glutamyl-phosphate reductase from Bacillus cereus (strain AH187).